The sequence spans 333 residues: DNA primase small subunit PriS (333 aa).

Residues aspartate 96, aspartate 98, and aspartate 237 contribute to the active site.

This sequence belongs to the eukaryotic-type primase small subunit family. Heterodimer of a small subunit (PriS) and a large subunit (PriL). Mg(2+) is required as a cofactor. It depends on Mn(2+) as a cofactor.

In terms of biological role, catalytic subunit of DNA primase, an RNA polymerase that catalyzes the synthesis of short RNA molecules used as primers for DNA polymerase during DNA replication. The small subunit contains the primase catalytic core and has DNA synthesis activity on its own. Binding to the large subunit stabilizes and modulates the activity, increasing the rate of DNA synthesis while decreasing the length of the DNA fragments, and conferring RNA synthesis capability. The DNA polymerase activity may enable DNA primase to also catalyze primer extension after primer synthesis. May also play a role in DNA repair. In Thermoplasma volcanium (strain ATCC 51530 / DSM 4299 / JCM 9571 / NBRC 15438 / GSS1), this protein is DNA primase small subunit PriS.